The sequence spans 110 residues: Inner membrane protein YgiZ (110 aa).

The Cytoplasmic portion of the chain corresponds to Met1–Thr8. A helical membrane pass occupies residues Ile9 to Phe29. The Periplasmic portion of the chain corresponds to Asn30–Arg53. The chain crosses the membrane as a helical span at residues Ile54–Arg74. The Cytoplasmic segment spans residues Lys75 to Glu83. A helical membrane pass occupies residues Phe84–Gly104. Residues Arg105 to Tyr110 lie on the Periplasmic side of the membrane.

It localises to the cell inner membrane. The sequence is that of Inner membrane protein YgiZ (ygiZ) from Escherichia coli (strain K12).